Here is a 359-residue protein sequence, read N- to C-terminus: Oplophorus-luciferin 2-monooxygenase non-catalytic subunit (359 aa).

Residues 1 to 39 (MAVNFKFSLLTITIVVNILVYCNASAIKFDVDLEKVPSN) form the signal peptide. 8 LRR repeats span residues 135 to 158 (AATLEKLVLLKNDLSSFPFEEMSQ), 160 to 180 (TKLNWLELSVNSITGWPALSS), 181 to 203 (DTLANLILFRNPIGNIPVDAFQT), 228 to 251 (SPKLQKLVLGYNGLTSLPVGAIKL), 255 to 278 (GPTTSNLGITNNQIISFPEGAVEG), 280 to 300 (QGILGIDFNRVTSLSEEVWRP), 302 to 325 (LENLFQFSLLNNPLACVCDVMWLI), and 331 to 356 (LAKIKGNPRCAGGKRLKNLDPAVFHA).

In terms of assembly, heterotetramer of a catalytic 19 kDa and a non-catalytic 35 kDa subunit.

Its subcellular location is the secreted. Non-catalytic subunit of oplophorus-luciferin 2-monooxygenase. May stabilize the active conformation of the catalytic subunit. This Oplophorus gracilirostris (Luminous shrimp) protein is Oplophorus-luciferin 2-monooxygenase non-catalytic subunit.